Here is a 450-residue protein sequence, read N- to C-terminus: Ceramide glucosyltransferase (450 aa).

Over 1-8 (MSDSGTLS) the chain is Lumenal. A helical membrane pass occupies residues 9 to 29 (LIGGIVFLVLWVVVWSICLLG). The Cytoplasmic segment spans residues 30–337 (WRTARIRYAH…IRVRKKMTLA (308 aa)). Position 96 (Asp-96) is a short sequence motif, D1. Residue Asp-148 is a short sequence motif, D2. Position 286 (Asp-286) is a short sequence motif, D3. Asp-286 functions as the Proton acceptor in the catalytic mechanism. The short motif at 323 to 327 (RRVRW) is the (Q/R)XXRW element. A helical membrane pass occupies residues 338–358 (ATLLEPLTESIISGLYGAWAI). Residues 359-361 (SRL) lie on the Lumenal side of the membrane. Residues 362-382 (LGGNILPLFLLHMAAWISVDI) form a helical membrane-spanning segment. Residues 383–401 (STKRALETNIKGIGPPESK) are Cytoplasmic-facing. Residues 402 to 422 (VTFLMAWAARECLALPIWMLA) traverse the membrane as a helical segment. At 423–450 (MTSSEVVWRGQKYKIIASGEAIRLGDRN) the chain is on the lumenal side.

Belongs to the glycosyltransferase 2 family.

The protein resides in the golgi apparatus membrane. It catalyses the reaction an N-acylsphing-4-enine + UDP-alpha-D-glucose = a beta-D-glucosyl-(1&lt;-&gt;1')-N-acylsphing-4-enine + UDP + H(+). It functions in the pathway lipid metabolism; sphingolipid metabolism. Its function is as follows. Catalyzes the final step in the biosynthesis of the membrane lipid glucosylceramide (GluCer), the transfer of glucose to ceramide. Glucosylceramides play important roles in growth, differentiation and pathogenicity. Essential factor in determining the success of fungal infection by regulating survival of yeast cells during the initial colonization of the host lung. This chain is Ceramide glucosyltransferase, found in Cryptococcus neoformans var. grubii serotype A (strain H99 / ATCC 208821 / CBS 10515 / FGSC 9487) (Filobasidiella neoformans var. grubii).